Here is a 30-residue protein sequence, read N- to C-terminus: GRRCPRIYMECKRDADCLADCVCLQHGICG.

Cystine bridges form between C4–C21, C11–C23, and C17–C29.

Belongs to the protease inhibitor I7 (squash-type serine protease inhibitor) family.

Its subcellular location is the secreted. Inhibits trypsin. This Citrullus lanatus (Watermelon) protein is Trypsin inhibitor 1.